We begin with the raw amino-acid sequence, 81 residues long: Large ribosomal subunit protein bL31B (81 aa).

Belongs to the bacterial ribosomal protein bL31 family. Type B subfamily. As to quaternary structure, part of the 50S ribosomal subunit.

This is Large ribosomal subunit protein bL31B from Limosilactobacillus fermentum (strain NBRC 3956 / LMG 18251) (Lactobacillus fermentum).